The following is a 153-amino-acid chain: Small ribosomal subunit protein eS19 (153 aa).

Disordered stretches follow at residues 77 to 99 and 113 to 139; these read YGTSKQGTTRYRVRPHQKTKGSG and GYVETSENDGRRVTGDGRSLLDDTAGD. Positions 120–133 are enriched in basic and acidic residues; it reads NDGRRVTGDGRSLL.

It belongs to the eukaryotic ribosomal protein eS19 family. As to quaternary structure, part of the 30S ribosomal subunit.

Its function is as follows. May be involved in maturation of the 30S ribosomal subunit. The protein is Small ribosomal subunit protein eS19 of Haloarcula marismortui (strain ATCC 43049 / DSM 3752 / JCM 8966 / VKM B-1809) (Halobacterium marismortui).